The primary structure comprises 290 residues: MSFMDQIPGGGNYPKLPVECLPNFPIQPSLTFRGRNDSHKLKNFISEIMLNMSMISWPNDASRIVYCRRHLLNPAAQWANDFVQEQGILEITFDTFIQGLYQHFYKPPDINKIFNAITQLSEAKLGIERLNQRFRKIWDRMPPDFMTEKAAIMTYTRLLTKETYNIVRMHKPETLKDAMEEAYQTTALTERFFPGFELDADGDTIIGATTHLQEEYDSDYDSEDNLTQNGYVHTVRTRRSYNKPMSNHRNRRNNNPSREECIKNRLCFYCKKEGHRLNECRARKASSNRS.

An N-acetylserine modification is found at S2. The segment at 265–282 adopts a CCHC-type zinc-finger fold; sequence RLCFYCKKEGHRLNECRA.

It is found in the cytoplasm. In terms of biological role, capsid protein (CA) is the structural component of the virus-like particle (VLP), forming the shell that encapsulates the retrotransposons dimeric RNA genome. Nucleocapsid protein p9 (NC) forms the nucleocore that coats the retro-elements dimeric RNA. Binds these RNAs through its zinc fingers. Promotes primer tRNA(i)-Met annealing to the multipartite primer-binding site (PBS), dimerization of Ty3 RNA and initiation of reverse transcription. This Saccharomyces cerevisiae (strain ATCC 204508 / S288c) (Baker's yeast) protein is Transposon Ty3-G Gag polyprotein (TY3A-G).